Reading from the N-terminus, the 87-residue chain is RNA-binding protein Hfq (87 aa).

One can recognise a Sm domain in the interval D9–V68. The tract at residues A65–D87 is disordered. Over residues H71–D87 the composition is skewed to basic and acidic residues.

The protein belongs to the Hfq family. Homohexamer.

RNA chaperone that binds small regulatory RNA (sRNAs) and mRNAs to facilitate mRNA translational regulation in response to envelope stress, environmental stress and changes in metabolite concentrations. Also binds with high specificity to tRNAs. The sequence is that of RNA-binding protein Hfq from Vibrio parahaemolyticus serotype O3:K6 (strain RIMD 2210633).